A 376-amino-acid polypeptide reads, in one-letter code: Carbamoyl phosphate synthase small chain (376 aa).

A nucleophile region spans residues 1–181 (MSKAVLVLED…VEPDGPPGVS (181 aa)). Positions 1 to 183 (MSKAVLVLED…PDGPPGVSRF (183 aa)) are CPSase. Residues Ser46, Gly232, Gly234, Phe261, Gln264, Asn302, Gly304, and Phe305 each contribute to the L-glutamine site. Residues 184–376 (TVAALDLGIK…FVELMAGEGR (193 aa)) enclose the Glutamine amidotransferase type-1 domain. Residues His350 and Glu352 contribute to the active site.

The protein belongs to the CarA family. Composed of two chains; the small (or glutamine) chain promotes the hydrolysis of glutamine to ammonia, which is used by the large (or ammonia) chain to synthesize carbamoyl phosphate. Tetramer of heterodimers (alpha,beta)4.

The enzyme catalyses hydrogencarbonate + L-glutamine + 2 ATP + H2O = carbamoyl phosphate + L-glutamate + 2 ADP + phosphate + 2 H(+). It carries out the reaction L-glutamine + H2O = L-glutamate + NH4(+). It participates in amino-acid biosynthesis; L-arginine biosynthesis; carbamoyl phosphate from bicarbonate: step 1/1. Its pathway is pyrimidine metabolism; UMP biosynthesis via de novo pathway; (S)-dihydroorotate from bicarbonate: step 1/3. Small subunit of the glutamine-dependent carbamoyl phosphate synthetase (CPSase). CPSase catalyzes the formation of carbamoyl phosphate from the ammonia moiety of glutamine, carbonate, and phosphate donated by ATP, constituting the first step of 2 biosynthetic pathways, one leading to arginine and/or urea and the other to pyrimidine nucleotides. The small subunit (glutamine amidotransferase) binds and cleaves glutamine to supply the large subunit with the substrate ammonia. In Mycobacterium tuberculosis (strain CDC 1551 / Oshkosh), this protein is Carbamoyl phosphate synthase small chain.